The chain runs to 593 residues: Aspartate--tRNA(Asp/Asn) ligase (593 aa).

Glu-173 is an L-aspartate binding site. The interval 197–200 (QLFK) is aspartate. L-aspartate is bound at residue Arg-219. Residues 219–221 (RDE) and Gln-228 each bind ATP. His-451 contributes to the L-aspartate binding site. Glu-485 is an ATP binding site. Residue Arg-492 participates in L-aspartate binding. 537-540 (GIDR) contributes to the ATP binding site.

Belongs to the class-II aminoacyl-tRNA synthetase family. Type 1 subfamily. Homodimer.

It is found in the cytoplasm. It catalyses the reaction tRNA(Asx) + L-aspartate + ATP = L-aspartyl-tRNA(Asx) + AMP + diphosphate. In terms of biological role, aspartyl-tRNA synthetase with relaxed tRNA specificity since it is able to aspartylate not only its cognate tRNA(Asp) but also tRNA(Asn). Reaction proceeds in two steps: L-aspartate is first activated by ATP to form Asp-AMP and then transferred to the acceptor end of tRNA(Asp/Asn). The sequence is that of Aspartate--tRNA(Asp/Asn) ligase from Legionella pneumophila (strain Paris).